Here is a 488-residue protein sequence, read N- to C-terminus: Tocopherol cyclase, chloroplastic (488 aa).

The transit peptide at 1 to 76 (MEIRSLIVSM…VPTSPNRELR (76 aa)) directs the protein to the chloroplast.

Its subcellular location is the plastid. It localises to the chloroplast. It is found in the plastoglobule. It catalyses the reaction delta-tocopherol = 2-methyl-6-phytyl-1,4-benzene-1,4-diol. The catalysed reaction is gamma-tocopherol = 2,3-dimethyl-6-phytylbenzene-1,4-diol. The enzyme catalyses delta-tocotrienol = 6-geranylgeranyl-2-methylbenzene-1,4-diol. It carries out the reaction gamma-tocotrienol = 6-geranylgeranyl-2,3-dimethylbenzene-1,4-diol. The protein operates within cofactor biosynthesis; tocopherol biosynthesis. Its function is as follows. Involved in the synthesis of both tocopherols and tocotrienols (vitamin E), which presumably protect photosynthetic complexes from oxidative stress. Catalyzes the conversion of 2-methyl-6-phytyl-1,4-hydroquinone and 2,3-dimethyl-5-phytyl-1,4-hydroquinone (DMPQ) to delta- and gamma-tocopherol respectively. Also converts 2,3-dimethyl-5-geranylgeranyl-1,4-hydroquinone (DMGQ) to gamma-tocotrienol. The sequence is that of Tocopherol cyclase, chloroplastic (VTE1) from Arabidopsis thaliana (Mouse-ear cress).